A 146-amino-acid chain; its full sequence is uncharacterized protein (146 aa).

Disordered stretches follow at residues 1–33 (MATF…GSYR) and 50–70 (QHWR…SWEG).

This is an uncharacterized protein from Homo sapiens (Human).